A 266-amino-acid chain; its full sequence is Probable carboxylesterase Os04g0669500 (266 aa).

Residues Ser154, Asp208, and His240 each act as charge relay system in the active site.

The protein belongs to the AB hydrolase superfamily. AB hydrolase 2 family.

Possesses carboxylesterase activity in vitro. The sequence is that of Probable carboxylesterase Os04g0669500 from Oryza sativa subsp. japonica (Rice).